The following is a 444-amino-acid chain: Proline--tRNA ligase (444 aa).

It belongs to the class-II aminoacyl-tRNA synthetase family. ProS type 2 subfamily. Homodimer.

It is found in the cytoplasm. The enzyme catalyses tRNA(Pro) + L-proline + ATP = L-prolyl-tRNA(Pro) + AMP + diphosphate. In terms of biological role, catalyzes the attachment of proline to tRNA(Pro) in a two-step reaction: proline is first activated by ATP to form Pro-AMP and then transferred to the acceptor end of tRNA(Pro). The sequence is that of Proline--tRNA ligase from Maricaulis maris (strain MCS10) (Caulobacter maris).